A 344-amino-acid chain; its full sequence is Sesquiterpene synthase 9 (344 aa).

Mg(2+) is bound by residues Asp-88, Asn-224, Ser-228, and Glu-232. The short motif at 88–92 (DEYSD) is the DDXXD motif element. The NSE/DTE motif motif lies at 224–232 (NDMLSWNVE). The (2E,6E)-farnesyl diphosphate site is built by Arg-313 and Tyr-314.

It belongs to the terpene synthase family. Mg(2+) serves as cofactor.

Functionally, terpene cyclase that catalyzes the cyclization of farnesyl diphosphate (FPP) to a single major sesquiterpene scaffold whose chemical structure is still unknown. The chain is Sesquiterpene synthase 9 from Postia placenta (strain ATCC 44394 / Madison 698-R) (Brown rot fungus).